A 420-amino-acid polypeptide reads, in one-letter code: Argininosuccinate synthase (420 aa).

23-31 contacts ATP; the sequence is AYSGGLDTS. Tyrosine 102 contacts L-citrulline. ATP is bound at residue glycine 132. Threonine 134, asparagine 138, and aspartate 139 together coordinate L-aspartate. Asparagine 138 serves as a coordination point for L-citrulline. 4 residues coordinate L-citrulline: arginine 142, serine 190, glutamate 274, and tyrosine 286.

The protein belongs to the argininosuccinate synthase family. Type 1 subfamily. As to quaternary structure, homotetramer.

The protein resides in the cytoplasm. The enzyme catalyses L-citrulline + L-aspartate + ATP = 2-(N(omega)-L-arginino)succinate + AMP + diphosphate + H(+). It functions in the pathway amino-acid biosynthesis; L-arginine biosynthesis; L-arginine from L-ornithine and carbamoyl phosphate: step 2/3. The protein is Argininosuccinate synthase of Renibacterium salmoninarum (strain ATCC 33209 / DSM 20767 / JCM 11484 / NBRC 15589 / NCIMB 2235).